A 567-amino-acid chain; its full sequence is MKQSKVFIPTMRDVPSEAEAQSHRLLLKSGLIKQSTSGIYSYLPLATRVLNNITAIVRQEMERIDSVEILMPALQQAELWEESGRWGAYGPELMRLQDRHGRQFALGPTHEELVTSIVRNELKSYKQLPMTLFQIQSKFRDEKRPRFGLLRGREFIMKDAYSFHADEASLDQTYQDMYQAYSRIFERVGINARPVVADSGAIGGSHTHEFMALSAIGEDTIVYSKESDYAANIEKAEVVYEPNHKHSTVQPLEKIETPNVKTAQELADFLGRPVDEIVKTMIFKVDGEYIMVLVRGHHEINDIKLKSYFGTDNIELATQDEIVNLVGANPGSLGPVIDKEIKIYADNFVQDLNNLVVGANEDGYHLINVNVGRDFNVDEYGDFRFILEGEKLSDGSGVAHFAEGIEVGQVFKLGTKYSESMNATFLDNQGKAQPLIMGCYGIGISRTLSAIVEQNHDDNGIVWPKSVTPFDLHLISINPKKDDQRELADALYAEFNTKFDVLYDDRQERAGVKFNDADLIGLPLRIVVGKRASEGIVEVKERLTGDSEEVHIDDLMTVITNKYDNLK.

It belongs to the class-II aminoacyl-tRNA synthetase family. ProS type 1 subfamily. Homodimer.

It localises to the cytoplasm. The enzyme catalyses tRNA(Pro) + L-proline + ATP = L-prolyl-tRNA(Pro) + AMP + diphosphate. In terms of biological role, catalyzes the attachment of proline to tRNA(Pro) in a two-step reaction: proline is first activated by ATP to form Pro-AMP and then transferred to the acceptor end of tRNA(Pro). As ProRS can inadvertently accommodate and process non-cognate amino acids such as alanine and cysteine, to avoid such errors it has two additional distinct editing activities against alanine. One activity is designated as 'pretransfer' editing and involves the tRNA(Pro)-independent hydrolysis of activated Ala-AMP. The other activity is designated 'posttransfer' editing and involves deacylation of mischarged Ala-tRNA(Pro). The misacylated Cys-tRNA(Pro) is not edited by ProRS. This chain is Proline--tRNA ligase, found in Staphylococcus aureus (strain Mu3 / ATCC 700698).